Here is a 205-residue protein sequence, read N- to C-terminus: GTP cyclohydrolase-2 (205 aa).

49-53 (RLHSE) is a GTP binding site. Residues C54, C65, and C67 each coordinate Zn(2+). Residues Q70, 92–94 (EGR), and T114 each bind GTP. D126 acts as the Proton acceptor in catalysis. Catalysis depends on R128, which acts as the Nucleophile. The GTP site is built by T149 and K154.

It belongs to the GTP cyclohydrolase II family. The cofactor is Zn(2+).

The catalysed reaction is GTP + 4 H2O = 2,5-diamino-6-hydroxy-4-(5-phosphoribosylamino)-pyrimidine + formate + 2 phosphate + 3 H(+). It functions in the pathway cofactor biosynthesis; riboflavin biosynthesis; 5-amino-6-(D-ribitylamino)uracil from GTP: step 1/4. In terms of biological role, catalyzes the conversion of GTP to 2,5-diamino-6-ribosylamino-4(3H)-pyrimidinone 5'-phosphate (DARP), formate and pyrophosphate. This chain is GTP cyclohydrolase-2, found in Pseudomonas putida (strain GB-1).